We begin with the raw amino-acid sequence, 376 residues long: Lipoyl synthase, mitochondrial (376 aa).

[4Fe-4S] cluster-binding residues include Cys102, Cys107, Cys113, Cys133, Cys137, Cys140, and Ser348. The Radical SAM core domain occupies 116 to 337 (GGEDKTATAT…EEVGGEMGFA (222 aa)).

The protein belongs to the radical SAM superfamily. Lipoyl synthase family. It depends on [4Fe-4S] cluster as a cofactor.

The protein localises to the mitochondrion. The enzyme catalyses [[Fe-S] cluster scaffold protein carrying a second [4Fe-4S](2+) cluster] + N(6)-octanoyl-L-lysyl-[protein] + 2 oxidized [2Fe-2S]-[ferredoxin] + 2 S-adenosyl-L-methionine + 4 H(+) = [[Fe-S] cluster scaffold protein] + N(6)-[(R)-dihydrolipoyl]-L-lysyl-[protein] + 4 Fe(3+) + 2 hydrogen sulfide + 2 5'-deoxyadenosine + 2 L-methionine + 2 reduced [2Fe-2S]-[ferredoxin]. The protein operates within protein modification; protein lipoylation via endogenous pathway; protein N(6)-(lipoyl)lysine from octanoyl-[acyl-carrier-protein]: step 2/2. Its function is as follows. Catalyzes the radical-mediated insertion of two sulfur atoms into the C-6 and C-8 positions of the octanoyl moiety bound to the lipoyl domains of lipoate-dependent enzymes, thereby converting the octanoylated domains into lipoylated derivatives. This is Lipoyl synthase, mitochondrial from Branchiostoma floridae (Florida lancelet).